A 302-amino-acid polypeptide reads, in one-letter code: Sulfate adenylyltransferase subunit 2 (302 aa).

The protein belongs to the PAPS reductase family. CysD subfamily. Heterodimer composed of CysD, the smaller subunit, and CysN.

The enzyme catalyses sulfate + ATP + H(+) = adenosine 5'-phosphosulfate + diphosphate. Its pathway is sulfur metabolism; hydrogen sulfide biosynthesis; sulfite from sulfate: step 1/3. Its function is as follows. With CysN forms the ATP sulfurylase (ATPS) that catalyzes the adenylation of sulfate producing adenosine 5'-phosphosulfate (APS) and diphosphate, the first enzymatic step in sulfur assimilation pathway. APS synthesis involves the formation of a high-energy phosphoric-sulfuric acid anhydride bond driven by GTP hydrolysis by CysN coupled to ATP hydrolysis by CysD. The sequence is that of Sulfate adenylyltransferase subunit 2 from Sodalis glossinidius (strain morsitans).